The chain runs to 307 residues: Malate dehydrogenase (307 aa).

NAD(+) is bound by residues 8–13 (GAGNVG) and aspartate 32. Residues arginine 81 and arginine 87 each contribute to the substrate site. Residues asparagine 94 and 117 to 119 (VSN) contribute to the NAD(+) site. Asparagine 119 and arginine 150 together coordinate substrate. Catalysis depends on histidine 174, which acts as the Proton acceptor.

It belongs to the LDH/MDH superfamily. MDH type 3 family.

It catalyses the reaction (S)-malate + NAD(+) = oxaloacetate + NADH + H(+). In terms of biological role, catalyzes the reversible oxidation of malate to oxaloacetate. The protein is Malate dehydrogenase of Dehalococcoides mccartyi (strain ATCC BAA-2100 / JCM 16839 / KCTC 5957 / BAV1).